The primary structure comprises 380 residues: Cytochrome b (380 aa).

Transmembrane regions (helical) follow at residues 34–54 (FGSL…LLAM), 78–99 (WLIR…YLHI), 114–134 (WNTG…GYVL), and 179–199 (FFAL…IHLT). Heme b-binding residues include His-84 and His-98. 2 residues coordinate heme b: His-183 and His-197. An a ubiquinone-binding site is contributed by His-202. 4 helical membrane-spanning segments follow: residues 227 to 247 (LKDF…ALFT), 289 to 309 (LGGV…PFLH), 321 to 341 (LSQT…WIGS), and 348 to 368 (FITI…ILFP).

Belongs to the cytochrome b family. As to quaternary structure, the cytochrome bc1 complex contains 11 subunits: 3 respiratory subunits (MT-CYB, CYC1 and UQCRFS1), 2 core proteins (UQCRC1 and UQCRC2) and 6 low-molecular weight proteins (UQCRH/QCR6, UQCRB/QCR7, UQCRQ/QCR8, UQCR10/QCR9, UQCR11/QCR10 and a cleavage product of UQCRFS1). This cytochrome bc1 complex then forms a dimer. Heme b is required as a cofactor.

It is found in the mitochondrion inner membrane. Functionally, component of the ubiquinol-cytochrome c reductase complex (complex III or cytochrome b-c1 complex) that is part of the mitochondrial respiratory chain. The b-c1 complex mediates electron transfer from ubiquinol to cytochrome c. Contributes to the generation of a proton gradient across the mitochondrial membrane that is then used for ATP synthesis. The polypeptide is Cytochrome b (MT-CYB) (Coracias caudatus (Lilac-breasted roller)).